A 153-amino-acid chain; its full sequence is Cornifin-B (153 aa).

2 disordered regions span residues Met1–Ser35 and Cys49–Ala85. Repeat copies occupy residues Pro27–Val34, Ser35–Asp42, Thr43–His50, Pro51–His58, Pro59–His66, Pro67–His74, Pro75–His82, Pro83–His90, Pro91–His98, Pro99–His106, Pro107–His114, Pro115–Leu122, Pro123–Gln130, and Pro131–Pro138. Residues Pro27 to Pro138 form a 14 X 8 AA approximate tandem repeats region.

Belongs to the cornifin (SPRR) family. In terms of tissue distribution, expressed in fetal periderm, hair follicles and in the thickened epidermis of the lip and footpad. Also present in the epithelia of various tissues such as the penis, vagina, forestomach, tongue and esophagus.

The protein resides in the cytoplasm. Its function is as follows. Cross-linked envelope protein of keratinocytes. It is a keratinocyte protein that first appears in the cell cytosol, but ultimately becomes cross-linked to membrane proteins by transglutaminase. All that results in the formation of an insoluble envelope beneath the plasma membrane. The polypeptide is Cornifin-B (Sprr1b) (Mus musculus (Mouse)).